The following is a 2156-amino-acid chain: Oxygen-regulated protein 1 (2156 aa).

Polar residues predominate over residues 1 to 19; the sequence is MSDTPSTGFSIIHPTSSEG. The segment at 1-25 is disordered; sequence MSDTPSTGFSIIHPTSSEGQVPPPR. Doublecortin domains follow at residues 36-118 and 154-233; these read KRIS…VDLD and RSLV…GNYD. 4 disordered regions span residues 353 to 375, 666 to 686, 1438 to 1458, and 1590 to 1621; these read VSKT…RTES, SSVA…SRYQ, DMEE…MTSS, and DWSD…TQEK.

Interacts (via the doublecortin domains) with microtubules. Interacts with RP1L1. Interacts with MAK. Expressed in retina. Not expressed in heart, brain, placenta, lung, liver, skeletal muscle, kidney, spleen and pancreas.

The protein resides in the cytoplasm. Its subcellular location is the cytoskeleton. The protein localises to the cilium axoneme. It localises to the cell projection. It is found in the cilium. The protein resides in the photoreceptor outer segment. Functionally, microtubule-associated protein regulating the stability and length of the microtubule-based axoneme of photoreceptors. Required for the differentiation of photoreceptor cells, it plays a role in the organization of the outer segment of rod and cone photoreceptors ensuring the correct orientation and higher-order stacking of outer segment disks along the photoreceptor axoneme. This Homo sapiens (Human) protein is Oxygen-regulated protein 1 (RP1).